Reading from the N-terminus, the 215-residue chain is MAERDSEPRVNIIRPDDEPEVEEERVPDPDMVIKHPLQNSWAMWFFKNDKSRDWKDNLRVITTFDTVEDFWGLYNHTLPASKLQSGCDYSVFKAGIQPMWEDAQNKKGGRWLINLNKTQRQTHLDDFWLETLLCLIGEGFDEHSEEICGATVNIRNKGDKLGLWTRDAQKTEATKKIGIKLKESLSVPPKIVIGFQAHSDTAGKAGSTVKNRFTV.

A disordered region spans residues 1–27 (MAERDSEPRVNIIRPDDEPEVEEERVP). A Phosphoserine; by PKC modification is found at serine 207.

The protein belongs to the eukaryotic initiation factor 4E family. In terms of assembly, eIF4F is a multi-subunit complex, the composition of which varies with external and internal environmental conditions. It is composed of at least eIF4A, eIF4E and eIF4G. eIF4E is also known to interact with other partners. In terms of processing, phosphorylation increases the ability of the protein to bind to mRNA caps and to form the eIF4F complex.

Its function is as follows. Recognizes and binds the 7-methylguanosine-containing mRNA cap during an early step in the initiation of protein synthesis and facilitates ribosome binding by inducing the unwinding of the mRNAs secondary structures. The protein is Eukaryotic translation initiation factor 4E of Aplysia californica (California sea hare).